A 187-amino-acid polypeptide reads, in one-letter code: Oligoribonuclease (187 aa).

The 164-residue stretch at 7-170 (LIWIDLEMTG…DDIKDSINEL (164 aa)) folds into the Exonuclease domain. Residue tyrosine 128 is part of the active site.

Belongs to the oligoribonuclease family.

Its subcellular location is the cytoplasm. Functionally, 3'-to-5' exoribonuclease specific for small oligoribonucleotides. The polypeptide is Oligoribonuclease (Legionella pneumophila (strain Paris)).